Reading from the N-terminus, the 161-residue chain is Bacterial E2-like ubiquitin protein BilB (161 aa).

Residue C113 is the Glycyl thioester intermediate of the active site.

Its function is as follows. Component of the Bil (bacterial ISG15-like) antiviral defense system, composed of BilA, BilB, BilC and BilD. The Bil system specifically conjugates a ubiquitin-like moiety (bilA) to the bacteriophage central tail fiber (CTF, or tip attachment protein J) via reactions involving E1 (bilD) and E2 (bilB). Modifies CTF of phage SECphi27 and SECphi4, which probably interferes with assembly of the phage tail. Also modifies T5 baseplate hub protein pb3 (gene D16), but not gp27 of phage T6 (Bil defends against T6). BilB probably accepts ubiquitin from the BilA-BilD (E1) complex and catalyzes its covalent attachment to target protein (CTF). Bil-encoding bacteria produce mostly defective phage SECphi27, many of which have phage assembly defects, including no tails. SECphi27 phage progeny produced in E.coli with the Bil system inject less DNA into naive host cells, maybe because the phage are less able to adsorb and inject their DNA into host cells. In terms of biological role, expression of the Bil system in E.coli (strain MG1655) confers about 100-fold resistance to phage SECphi27, SECphi18, SECphi6, SECphi4 and T5, but not to SECphi17. When cells expressing the Bil system are infected by phage SECphi27 at low multiplicity of infection (0.03 MOI) the culture survives, at 3.0 MOI the culture collapses at the same time as cells without the Bil system. This Collimonas sp. (strain OK412) protein is Bacterial E2-like ubiquitin protein BilB.